A 490-amino-acid polypeptide reads, in one-letter code: MVPVVALVGRPNVGKSTLFNRLTRTRDALVADFPGLTRDRKYGRAEVEGREFICIDTGGIDGTEDGVETRMAEQSLLAIEEADVVLFMVDARAGLMPADEAIAKHLRSREKPTFLVANKTDGLDPDQAVVDFYSLGLGEIYPIAASHGRGVLSLLEHVLLPWMDDVAPQEKVDEDAEYWAQFEAEQNGEEAPEDDFDPQSLPIKLAIVGRPNVGKSTLTNRILGEERVVVYDMPGTTRDSIYIPMERDEREYVLIDTAGVRKRGKITDAVEKFSVIKTLQAIEDANVVLLVIDAREGISDQDLSLLGFILNSGRSLVIVVNKWDGLSQEVKEQVKETLDFRLGFIDFARVHFISALHGSGVGNLFESVREAYDSSTRRVSTAMLTRIMTMAVEDHQPPLVRGRRVKLKYAHAGGYNPPIVVIHGNQVKDLPDSYKRYLMNYFRKSLEVMGTPIRIQFKEGENPYANKRNTLTPTQMRKRKRLMKHIKKSK.

2 consecutive EngA-type G domains span residues 3–166 (PVVA…MDDV) and 203–376 (IKLA…DSST). GTP is bound by residues 9–16 (GRPNVGKS), 56–60 (DTGGI), 118–121 (NKTD), 209–216 (GRPNVGKS), 256–260 (DTAGV), and 321–324 (NKWD). The region spanning 377 to 461 (RRVSTAMLTR…PIRIQFKEGE (85 aa)) is the KH-like domain.

It belongs to the TRAFAC class TrmE-Era-EngA-EngB-Septin-like GTPase superfamily. EngA (Der) GTPase family. As to quaternary structure, associates with the 50S ribosomal subunit.

GTPase that plays an essential role in the late steps of ribosome biogenesis. This is GTPase Der from Salmonella choleraesuis (strain SC-B67).